A 129-amino-acid polypeptide reads, in one-letter code: MKSVQFCFLFCCWKAICCSSCELTNITIAVEKEECRFCISINTTWCSGYCYTRDLVYKDPARPNIQKICTFKELVYETVRVPGCAHHADSLYTYPVATECHCGNCDSDSTDCTVRGLGPSYCSFGEMKE.

An N-terminal signal peptide occupies residues Met-1 to Cys-18. 6 disulfides stabilise this stretch: Cys-21–Cys-69, Cys-35–Cys-84, Cys-38–Cys-122, Cys-46–Cys-100, Cys-50–Cys-102, and Cys-105–Cys-112. Residues Asn-25 and Asn-42 are each glycosylated (N-linked (GlcNAc...) asparagine).

This sequence belongs to the glycoprotein hormones subunit beta family. In terms of assembly, heterodimer. The active follitropin is a heterodimer composed of an alpha chain/CGA shared with other hormones and a unique beta chain/FSHB shown here.

It localises to the secreted. Functionally, together with the alpha chain CGA constitutes follitropin, the follicle-stimulating hormone, and provides its biological specificity to the hormone heterodimer. Binds FSHR, a G protein-coupled receptor, on target cells to activate downstream signaling pathways. Follitropin is involved in follicle development and spermatogenesis in reproductive organs. In Oryctolagus cuniculus (Rabbit), this protein is Follitropin subunit beta (FSHB).